A 274-amino-acid polypeptide reads, in one-letter code: MTKIWFITGSSRGLGLAIAEAALNNGDSVIATARKPEQLTNLVNKFGKERVFPVALDVTDNNQVLQAVKSGHEKFGRIDVVINNAGYANTAAVEDIDVDDFCAQVEANLMGVVYVSKAVLPILRQQKSGHIFQVSSLGGRIGAPGLSAYQSAKWAVGGFSTVLAQEVASFGIKITVLEPGGIRTDWAGSSMQVPTVSEPYQATVGAFAESLRKSSGSEVSIPSKIANIVLKVLGEKEPPLRLLVGPDAVEYAGKAAEVLSASDEKWRELSLASA.

NADP(+)-binding residues include L14, T32, D57, N84, and K117. Catalysis depends on proton donor residues S135 and Y149. NADP(+) contacts are provided by Y149, K153, I182, and T184. The Lowers pKa of active site Tyr role is filled by K153.

Belongs to the short-chain dehydrogenases/reductases (SDR) family.

It functions in the pathway polyketide biosynthesis. Its function is as follows. Oxidoreductase; part of the gene cluster B that mediates the biosynthesis of botcinic acid and its botcinin derivatives, acetate-derived polyketides that contribute to virulence when combined with the sesquiterpene botrydial. Botcinic acid and its derivatives have been shown to induce chlorosis and necrosis during host plant infection, but also have antifungal activities. Two polyketide synthases, BOA6 and BOA9, are involved in the biosynthesis of botcinins. BOA6 mediates the formation of the per-methylated tetraketide core by condensation of four units of malonyl-CoA with one unit of acetyl-CoA, which would be methylated in activated methylene groups to yield a bicyclic acid intermediate that could then either be converted to botrylactone derivatives or lose the starter acetate unit through a retro-Claisen type C-C bond cleavage to yield botcinin derivatives. The second polyketide synthase, BOA9, is probably required for the biosynthesis of the tetraketide side chain of botcinins. The methyltransferase (MT) domain within BOA6 is probably responsible for the incorporation of four methyl groups. The trans-enoyl reductase BOA5 might take over the enoyl reductase function of BOA6 that misses an ER domain. The monooxygenases BOA2, BOA3 and BOA4 might be involved in further hydroxylations at C4, C5 and C8, whereas BOA7, close to BOA9, could potentially be involved in the hydroxylation at C4 in the side chain of botcinins. This Botryotinia fuckeliana (strain B05.10) (Noble rot fungus) protein is Oxidoreductase BOA17.